Reading from the N-terminus, the 2515-residue chain is Nonribosomal peptide synthetase tpzA (2515 aa).

An adenylation 1 region spans residues 246–648; sequence ELATRQPGAQ…GRMGTQVKLR (403 aa). Residues 794–867 enclose the Carrier 1 domain; it reads SEVEHLIHAI…DMATVALKTS (74 aa). The residue at position 828 (serine 828) is an O-(pantetheine 4'-phosphoryl)serine. The segment at 924 to 1332 is condensation 1; it reads DAYPCSPLQE…IRSVPHITPE (409 aa). Positions 1357–1758 are adenylation 2; that stretch reads RKQSQETPSA…GRMNDQIKLR (402 aa). The Carrier 2 domain occupies 1900 to 1976; the sequence is LATTNEERTL…AILSHLTGRK (77 aa). Serine 1937 carries the post-translational modification O-(pantetheine 4'-phosphoryl)serine. Positions 2013 to 2431 are condensation 2; sequence VEDIYPCGPI…LGILPPEEQK (419 aa). The region spanning 2436-2512 is the Carrier 3 domain; that stretch reads PSLSAAVVRL…AMARRSLVVS (77 aa). Serine 2473 is modified (O-(pantetheine 4'-phosphoryl)serine).

Belongs to the NRP synthetase family.

It participates in secondary metabolite biosynthesis. Nonribosomal peptide synthetase; part of the gene cluster that mediates the biosynthesis of terreazepine,. The first step of terreazepine biosynthesis is catalyzed by the indoleamine 2,3-dioxygenase tpzB which produces N-formyl-kynurenine through the catabolism of tryptophan. The two-module NRPS tpzA then utilizes anthranilate and kynurenine to assemble terreazepine. The first adenylation domain of tpzA (A1) loads anthranilate onto the T1 domain, while A2 loads kynurenine, generated through spontaneous nonenzymatic deformylation of the tzpB-supplied N-formyl-kynurenine. TpzA produces a 2:1 mixture of S-R enantiomers, which suggests that the A2 domain accepts both D- and L-kynurenine. The peptide bond formation between the tethered amino acids is catalyzed by the first condensation domain (C1) between anthranilate's carbonyl carbon and kynurenine's aliphatic primary amine. The second C domain (C2) catalyzes the final cyclization event between the aromatic amine of kynurenine and the tethered carbonyl carbon, yielding the final terreazepine product. The T3 domain may facilitate the interaction with downstream tailoring enzymes. The chain is Nonribosomal peptide synthetase tpzA from Aspergillus terreus (strain NIH 2624 / FGSC A1156).